We begin with the raw amino-acid sequence, 703 residues long: DnaJ homolog subfamily C member 14 (703 aa).

Residues 1 to 11 (MAQKHPGERRL) are compositionally biased toward basic and acidic residues. The segment at 1-229 (MAQKHPGERR…GRHRLARKRS (229 aa)) is disordered. Over residues 17-28 (SGGTSLSTSGSS) the composition is skewed to low complexity. The segment covering 75 to 84 (HGPPRGPGPP) has biased composition (pro residues). Positions 91–102 (DESETGSEESGV) are enriched in acidic residues. The segment covering 121-133 (SFLSIPSACNCQG) has biased composition (polar residues). Residues 163-176 (GEDEELEEEYDDEE) show a composition bias toward acidic residues. The segment covering 193-202 (PLSRRQKHRF) has biased composition (basic residues). The span at 203 to 218 (LIKEDVRDSGRREPKA) shows a compositional bias: basic and acidic residues. The span at 219 to 228 (PGRHRLARKR) shows a compositional bias: basic residues. 2 helical membrane passes run 305–325 (MMFQ…IRIL) and 327–347 (VVGA…QLGW). Residues 444–508 (NPFHVLGVEA…ERRKEYEMKR (65 aa)) enclose the J domain. Disordered stretches follow at residues 622-643 (FGSR…PPAD) and 659-703 (MSNG…PFQR). Residues 673 to 684 (GTTSTSRPNSSV) show a composition bias toward polar residues. Residues 691-703 (PKRRKKVRRPFQR) are compositionally biased toward basic residues.

In terms of assembly, interacts with the FxxxFxxxF motif of DRD1 via its C-terminal domain.

It localises to the endoplasmic reticulum membrane. Functionally, regulates the export of target proteins, such as DRD1, from the endoplasmic reticulum to the cell surface. This Mus musculus (Mouse) protein is DnaJ homolog subfamily C member 14 (Dnajc14).